We begin with the raw amino-acid sequence, 997 residues long: Serine-repeat antigen protein 5 (997 aa).

An N-terminal signal peptide occupies residues 1 to 22 (MKSYISLFFILCVIFNKNVIKC). Disordered stretches follow at residues 26–107 (SQTG…EKQD) and 181–252 (LPSN…PRNL). Over residues 30-51 (NTGGGQAGNTGGDQAGSTGGSP) the composition is skewed to gly residues. The span at 52 to 67 (QGSTGASPQGSTGASP) shows a compositional bias: low complexity. The segment covering 68–84 (QGSTGASQPGSSEPSNP) has biased composition (polar residues). 3 stretches are compositionally biased toward low complexity: residues 85-103 (VSSG…STSS), 183-196 (SNGT…STGT), and 205-235 (SDSS…SSES). Residue S183 is modified to Phosphoserine. An N-linked (GlcNAc...) asparagine glycan is attached at N184. Residues 216–253 (SSSSSSSSSSSSSSSSSSESLPANGPDSPTVKPPRNLQ) are interaction with PTKL. Residue N318 is glycosylated (N-linked (GlcNAc...) asparagine). The interval 373 to 390 (YKYLSEDIVSKFKEIKAE) is interaction with host VTN. An intrachain disulfide couples C445 to C497. A Phosphothreonine; by CPK1 modification is found at T549. 5 cysteine pairs are disulfide-bonded: C567–C572, C581–C610, C593–C636, C627–C672, and C755–C809. A thiol-protease-like region spans residues 579–997 (NNCISNLQVE…TNNECYFCYV (419 aa)). Active-site residues include H762 and N787. N-linked (GlcNAc...) asparagine glycosylation occurs at N828. A propeptide spans 843–886 (KASPEFYHNLYFKNFNVGKKNLFSEKEDNENNKKLGNNYIIFGQ) (inhibition peptide). S866 is subject to Phosphoserine.

The protein belongs to the peptidase C1 family. As to quaternary structure, may interact (via C-terminus) with PTKL (via SAM domain). In terms of assembly, interacts (via C-terminus) with human VTN (via hemopexin repeat 2); may form heterotetramers of two VTN and SERA5 P47 heterodimers; the interaction may protect merozoites from phagocytosis by host monocytes; VTN glycosylation appears to be dispensable for the interaction. Monomer. Interacts with kinase CPK1/CDPK1 at the schizont stage. In terms of processing, phosphorylation by CPK1/CDPK1 increases SERA5 protease activity towards a synthetic peptide in vitro. Just prior to merozoite egress from host erythrocytes, proteolytically cleaved into multiple fragments. Cleaved by SUB1 into p47 and p73, p73 is further cleaved by SUB1 into p56 and p18 and p56 is further processed into p50 by an unidentified protease. p47 remains covalently associated with p18 via disulfide bond. p47 can be processed into p25n and p25c by SUB1. p25c and p25n remain associated with p18. Proteolytic processing is essential for merozoite egress from host erythrocytes. The cleavage of the propeptide to produce p50 is necessary for protease activity and to promote merozoite egress.

The protein localises to the parasitophorous vacuole. It localises to the secreted. It is found in the cell membrane. Plays an essential role during the asexual blood stage development by controlling the kinetics of merozoite egress from host erythrocytes. Specifically, prevents premature rupture of the parasitophorous vacuole and host erythrocyte membranes. In terms of biological role, may prevent merozoite phagocytosis by host monocytes via interaction with host VTN at the merozoite surface. Plays a role in parasite growth. Its function is as follows. Protease activity is controversial. Has been shown in a number of studies to have protease activity towards a synthetic peptide in vitro. Has also been shown to lack protease activity towards a synthetic peptide in vitro. In Plasmodium falciparum (isolate 3D7), this protein is Serine-repeat antigen protein 5.